We begin with the raw amino-acid sequence, 335 residues long: AA9 family lytic polysaccharide monooxygenase A (335 aa).

Residues 1–21 (MSSFITKTVLAALVAAAGVRA) form the signal peptide. His-22 and His-107 together coordinate Cu(2+). A disulfide bridge links Cys-77 with Cys-196. O2 is bound by residues His-182 and Gln-191. Tyr-193 is a binding site for Cu(2+). Residues 241–335 (PKMNIAGGSS…ARRHARDMMN (95 aa)) are disordered. Low complexity predominate over residues 251–303 (GAAPSTPATPTTGSGSDTPSNTAAPVESAPAESAAPVESAPAAGNGNQNNGGA). Residues 321–335 (CKAKKARRHARDMMN) are compositionally biased toward basic residues.

It belongs to the polysaccharide monooxygenase AA9 family. Cu(2+) serves as cofactor.

The protein localises to the secreted. The enzyme catalyses [(1-&gt;4)-beta-D-glucosyl]n+m + reduced acceptor + O2 = 4-dehydro-beta-D-glucosyl-[(1-&gt;4)-beta-D-glucosyl]n-1 + [(1-&gt;4)-beta-D-glucosyl]m + acceptor + H2O.. Functionally, lytic polysaccharide monooxygenase (LPMO) that depolymerizes crystalline and amorphous polysaccharides via the oxidation of scissile alpha- or beta-(1-4)-glycosidic bonds, yielding C1 or C4 oxidation products. Catalysis by LPMOs requires the reduction of the active-site copper from Cu(II) to Cu(I) by a reducing agent and H(2)O(2) or O(2) as a cosubstrate. Is capable of cleaving cellulose, but not chitin. Is also active on tamarind xyloglucan and longer xyloglucan oligosaccharides. Has no activity toward shorter cellooligosaccharides (Glc3-6), as well as toward the xyloglucan-heptamer, birchwood xylan, wheat arabinoxylan, konjac glucomannan, ivory nut mannan, beta-glucan from barley, lichenan from Icelandic moss, starch, and spruce galactoglucomannan. Has unprecedented broad specificity on xyloglucan, cleaving any glycosidicbond in theb-glucan main chain, regardless of xylosyl substitutions. When incubated with a mixture of xyloglucan and cellulose, efficiently attacks the xyloglucan, whereas cellulose conversion is inhibited, suggesting that removal of hemicellulose may be the true function of this LPMO during biomass conversion. This is AA9 family lytic polysaccharide monooxygenase A from Gibberella zeae (strain ATCC MYA-4620 / CBS 123657 / FGSC 9075 / NRRL 31084 / PH-1) (Wheat head blight fungus).